The sequence spans 396 residues: Stearoyl-[acyl-carrier-protein] 9-desaturase, chloroplastic (396 aa).

Residues 1-33 (MALRITPVTLQSERYRSFSFPKKANLRSPKFAM) constitute a chloroplast transit peptide. Ala34 carries the post-translational modification Blocked amino end (Ala); partial. The Fe cation site is built by Glu138, Glu176, His179, Glu229, Glu262, and His265.

It belongs to the fatty acid desaturase type 2 family. In terms of assembly, homodimer. Requires Fe(2+) as cofactor. In terms of processing, most of the N-terminus is blocked.

The protein resides in the plastid. Its subcellular location is the chloroplast. It catalyses the reaction octadecanoyl-[ACP] + 2 reduced [2Fe-2S]-[ferredoxin] + O2 + 2 H(+) = (9Z)-octadecenoyl-[ACP] + 2 oxidized [2Fe-2S]-[ferredoxin] + 2 H2O. It participates in lipid metabolism; fatty acid metabolism. In terms of biological role, converts stearoyl-ACP to oleoyl-ACP by introduction of a cis double bond between carbons 9 and 10 of the acyl chain. The sequence is that of Stearoyl-[acyl-carrier-protein] 9-desaturase, chloroplastic from Carthamus tinctorius (Safflower).